A 354-amino-acid chain; its full sequence is Aspartate carbamoyltransferase catalytic subunit (354 aa).

Arg-67 and Thr-68 together coordinate carbamoyl phosphate. Residue Lys-95 participates in L-aspartate binding. Residues Arg-117, His-150, and Gln-153 each contribute to the carbamoyl phosphate site. Positions 190 and 261 each coordinate L-aspartate. Carbamoyl phosphate is bound by residues Gly-302 and Pro-303.

Belongs to the aspartate/ornithine carbamoyltransferase superfamily. ATCase family. Heterododecamer (2C3:3R2) of six catalytic PyrB chains organized as two trimers (C3), and six regulatory PyrI chains organized as three dimers (R2).

The enzyme catalyses carbamoyl phosphate + L-aspartate = N-carbamoyl-L-aspartate + phosphate + H(+). Its pathway is pyrimidine metabolism; UMP biosynthesis via de novo pathway; (S)-dihydroorotate from bicarbonate: step 2/3. Its function is as follows. Catalyzes the condensation of carbamoyl phosphate and aspartate to form carbamoyl aspartate and inorganic phosphate, the committed step in the de novo pyrimidine nucleotide biosynthesis pathway. The polypeptide is Aspartate carbamoyltransferase catalytic subunit (Synechococcus sp. (strain RCC307)).